Reading from the N-terminus, the 2528-residue chain is Highly reducing polyketide synthase pspA (2528 aa).

The disordered stretch occupies residues M1–P53. Over residues D24–S42 the composition is skewed to polar residues. Residues V63–S483 enclose the Ketosynthase family 3 (KS3) domain. Residues C235, H371, and H406 each act as for beta-ketoacyl synthase activity in the active site. A malonyl-CoA:ACP transacylase (MAT) domain region spans residues T590–E909. Positions H961–E1089 are N-terminal hotdog fold. A dehydratase (DH) domain region spans residues H961–I1230. Residues H961 to A1244 enclose the PKS/mFAS DH domain. The active-site Proton acceptor; for dehydratase activity is H993. The tract at residues P1099–A1244 is C-terminal hotdog fold. The Proton donor; for dehydratase activity role is filled by D1160. The tract at residues V1409–H1587 is methyltransferase (CMet) domain. The segment at G1803–I2119 is enoyl reductase (ER) (ER) domain. Positions R2143–Q2322 are ketoreductase (KR) domain. The Carrier domain occupies E2447 to L2525. An O-(pantetheine 4'-phosphoryl)serine modification is found at S2485.

It carries out the reaction 9 malonyl-CoA + acetyl-CoA + S-adenosyl-L-methionine + 13 NADPH + 20 H(+) = soppiline A + S-adenosyl-L-homocysteine + 9 CO2 + 13 NADP(+) + 10 CoA + 7 H2O. The protein operates within secondary metabolite biosynthesis. Functionally, highly reducing polyketide synthase; part of the gene cluster that mediates the biosynthesis of the alkylresorcinols called soppilines. The biosynthesis starts with the HR-PKS pspA-catalyzed carbon chain assembly through nine chain elongation cycles, using acetyl CoA and malonyl CoA as a starter and extender units, respectively, to produce the polyketide soppiline A. In the first round, the KR, DH, and CMeT domains work to produce 2-methyl-2-butenyl thioester. In rounds 2 to 5, the KR, DH, and ER domains fully catalyze the reduction of the elongated beta-ketothioester, resulting in the insertion of eight methylene units. The unusual Z,E,Z-triene motif is likely constructed during rounds 6 to 8. Typically, the DH domain introduces a double bond at an alpha,beta-position of an elongated polyketide chain, with the dehydration of a beta-hydroxy group. The last extension cycle would be carried out with L-oriented beta-ketoreduction by the KR domain to produce beta-hydroxy carboxylic acid soppiline A. The type III PKS pspB intercepts the elongated polyketide chain at round 8 from the HR-PKS pspA, followed by a tri-keto extension and decarboxylative aldol cyclization to produce 1,3,5-trisubstituted alkylresorcinol soppiline B. Subsequently, the cytochrome P450 monooxygenase pspC catalyzes three-step oxidations at the C-4 methyl group to carboxylic acid to yield soppiline C. This is Highly reducing polyketide synthase pspA from Penicillium soppii.